Here is a 266-residue protein sequence, read N- to C-terminus: Hydroxyethylthiazole kinase (266 aa).

A substrate-binding site is contributed by methionine 43. The ATP site is built by arginine 119 and threonine 166. A substrate-binding site is contributed by glycine 193.

Belongs to the Thz kinase family. The cofactor is Mg(2+).

The catalysed reaction is 5-(2-hydroxyethyl)-4-methylthiazole + ATP = 4-methyl-5-(2-phosphooxyethyl)-thiazole + ADP + H(+). It functions in the pathway cofactor biosynthesis; thiamine diphosphate biosynthesis; 4-methyl-5-(2-phosphoethyl)-thiazole from 5-(2-hydroxyethyl)-4-methylthiazole: step 1/1. Catalyzes the phosphorylation of the hydroxyl group of 4-methyl-5-beta-hydroxyethylthiazole (THZ). The polypeptide is Hydroxyethylthiazole kinase (Methanococcus vannielii (strain ATCC 35089 / DSM 1224 / JCM 13029 / OCM 148 / SB)).